The sequence spans 359 residues: UDP-2-acetamido-2-deoxy-3-oxo-D-glucuronate aminotransferase (359 aa).

Positions 29, 31, and 184 each coordinate UDP-2-acetamido-2-deoxy-alpha-D-ribo-hex-3-uluronate. At K185 the chain carries N6-(pyridoxal phosphate)lysine. The UDP-2-acetamido-2-deoxy-alpha-D-ribo-hex-3-uluronate site is built by R229, H308, and Y309.

Belongs to the DegT/DnrJ/EryC1 family. As to quaternary structure, homodimer. Pyridoxal 5'-phosphate serves as cofactor.

It catalyses the reaction UDP-2-acetamido-2-deoxy-alpha-D-ribo-hex-3-uluronate + L-glutamate = UDP-2-acetamido-3-amino-2,3-dideoxy-alpha-D-glucuronate + 2-oxoglutarate. It participates in bacterial outer membrane biogenesis; LPS O-antigen biosynthesis. Its function is as follows. Plays a role in the biosynthesis of B-band O antigen for serotype O5. Catalyzes the amination of UDP-2-acetamido-2-deoxy-3-oxo-D-glucuronic acid (UDP-3-oxo-D-GlcNAcA) to UDP-2-acetamido-3-amino-2,3-dideoxy-D-glucuronic acid (UDP-GlcNAc3NA), using L-glutamate as the preferred amine donor. The protein is UDP-2-acetamido-2-deoxy-3-oxo-D-glucuronate aminotransferase of Pseudomonas aeruginosa (strain ATCC 15692 / DSM 22644 / CIP 104116 / JCM 14847 / LMG 12228 / 1C / PRS 101 / PAO1).